A 238-amino-acid chain; its full sequence is Oxidoreductase dmxR7 (238 aa).

Belongs to the avfA family.

It participates in secondary metabolite biosynthesis. In terms of biological role, oxidoreductase; part of the gene cluster that mediates the biosynthesis of the dimeric xanthones cryptosporioptides. The pathway begins with the synthesis of atrochrysone thioester by the polyketide synthase dmx-nrPKS. The atrochrysone carboxyl ACP thioesterase dmxR1 then breaks the thioester bond and releases the atrochrysone carboxylic acid from dmx-nrPKS. Atrochrysone carboxylic acid is decarboxylated by the decarboxylase dmxR15, and oxidized by the anthrone oxygenase dmxR16 to yield emodin. Emodin is then reduced to emodin hydroquinone by the oxidoreductase dmxR7. A-ring reduction by the short chain dehydrogenase dmxR18, dehydration by the scytalone dehydratase-like protein dmxR17 and probable spontaneous re-oxidation, results in overall deoxygenation to chrysophanol. Baeyer-Villiger oxidation by the Baeyer-Villiger monooxygenase (BVMO) dmxR6 then yields monodictylactone in equilibrium with monodictyphenone. In the case of the cryptosporioptides biosynthesis, monodictylactone is reduced at C-12 to an alcohol (by the short chain dehydrogenases dmxR12 or dmxR8) and hydroxylated at C-5 by dmxR9, yielding the electron-rich aromatic which could eliminate H(2)O to form the ortho-quinonemethide, followed by tautomerisation to paraquinone and complete the formal reduction to produce the 10-methylgroup. Conjugate addition of C-4a-OH to the resulting paraquinone by the monooxygenase dmxR10 then gives cyclohexadienone, which is then reduced at C-5 by the short chain dehydrogenase dmxR3 to give the dihydroxanthone. The 6,7-epoxide in the cryptosporioptides could be introduced by the cytochrome P450 monooxygenase dmxL3. The highly reducing PKS dmxL2 manufactures butyrate, which is further carboxylated by dmxL1 to form ethylmalonate. It is not yet clear whether the carboxylation occurs while the butyrate is attached to the ACP of dmxL2, but this unusual fungal metabolite could then be esterified to O-5 by the O-acetyltransferase dmxR13. Finally, dimerization performed by dmxR5 gives the observed dimers cryptosporioptides A, B and C as the final products of the pathway. The sequence is that of Oxidoreductase dmxR7 from Cryptosporiopsis sp. (strain 8999).